The primary structure comprises 314 residues: MPVKIPDDLPAAEILESENIFVMSETRAANQDIRPMKVLILNLMPNKIETETQLLRLLGNTPLQVDVDLLRIHDKESRHTSIDHMNNFYRDFEAVRHKNYDGLIITGAPLGQVEFEDVSYWDHIREIIDWSQQHVTSVLFLCWAAHAALFHLYGLNRKLLKEKRSGVFLHKRTHRHVPLLRGFDDEFLAPHSRFAEMDVQLLKAHPALQVLTESDEAGAYMVLSTNNRNLFVMGHPEYQKSTLKDEYFRDLGAGLQPEIPQNYFRHNDPGQDPVARWYGHGSLLISNWLNYYVYQLTPYNLDDMSGITPWENEV.

The active-site Acyl-thioester intermediate is Cys142. Substrate is bound by residues Lys163 and Ser192. His235 (proton acceptor) is an active-site residue. Residue Glu237 is part of the active site. Residue Arg249 participates in substrate binding.

The protein belongs to the MetA family.

Its subcellular location is the cytoplasm. It catalyses the reaction L-homoserine + succinyl-CoA = O-succinyl-L-homoserine + CoA. It functions in the pathway amino-acid biosynthesis; L-methionine biosynthesis via de novo pathway; O-succinyl-L-homoserine from L-homoserine: step 1/1. Functionally, transfers a succinyl group from succinyl-CoA to L-homoserine, forming succinyl-L-homoserine. In Shewanella sediminis (strain HAW-EB3), this protein is Homoserine O-succinyltransferase.